A 366-amino-acid chain; its full sequence is Melatonin receptor type 1A (366 aa).

Topologically, residues M1–T45 are extracellular. Residues N16 and N23 are each glycosylated (N-linked (GlcNAc...) asparagine). The chain crosses the membrane as a helical span at residues L46–L66. Residues S67–N79 are Cytoplasmic-facing. The chain crosses the membrane as a helical span at residues V80–A100. Topologically, residues L101–L118 are extracellular. Residues C116 and C193 are joined by a disulfide bond. Residues S119–I139 form a helical membrane-spanning segment. Topologically, residues N140–T158 are cytoplasmic. A helical membrane pass occupies residues N159–L179. The Extracellular segment spans residues C180–Y203. The chain crosses the membrane as a helical span at residues T204 to L224. Residues R225–M256 are Cytoplasmic-facing. Residues F257–V277 form a helical membrane-spanning segment. Residues A278–E290 lie on the Extracellular side of the membrane. A helical membrane pass occupies residues W291–Y311. The Cytoplasmic segment spans residues G312–V366.

This sequence belongs to the G-protein coupled receptor 1 family.

It is found in the cell membrane. High affinity receptor for melatonin. Likely to mediate the reproductive and circadian actions of melatonin. The activity of this receptor is mediated by pertussis toxin sensitive G proteins that inhibit adenylate cyclase activity. Possibly involved in sleep induction, by melatonin activation of the potassium channel KCNMA1/BK and the dissociation of G-beta and G-gamma subunits, thereby decreasing synaptic transmission. The chain is Melatonin receptor type 1A (MTNR1A) from Ovis aries (Sheep).